The sequence spans 295 residues: MYPAYNPYSYRYLNPRNKGMSWRQKNYLASYGDTGDYCDNYQRAQLKAILSQVNPNLTPRLCRANTRDVGVQVNPRQDASVQCSLGPRTLLRRRPGALRKPPPEQGSPASPTKTVRFPRTIAVYSPVAAGRLAPFQDEGVNLEEKGEAVRSEGSEGGRQEGKQGDGEIKEQMKMDKTDEEEAAPAQTRPKFQFLEQKYGYYHCKDCNIRWESAYVWCVQETNKVYFKQFCRTCQKSYNPYRVEDIMCQSCKQTRCACPVKLRHVDPKRPHRQDLCGRCKGKRLSCDSTFSFKYII.

2 disordered regions span residues 80–115 and 144–186; these read SVQC…TKTV and EKGE…APAQ. Residues 144 to 176 are compositionally biased toward basic and acidic residues; sequence EKGEAVRSEGSEGGRQEGKQGDGEIKEQMKMDK. Residues 197 to 280 form a 3CxxC-type zinc finger; the sequence is KYGYYHCKDC…RQDLCGRCKG (84 aa).

It belongs to the ZAR1 family. As to expression, ovary. Also expressed in lung and muscle.

The protein localises to the cytoplasm. It localises to the cytoplasmic ribonucleoprotein granule. Functionally, mRNA-binding protein required for maternal mRNA storage, translation and degradation during oocyte maturation. Probably promotes formation of some phase-separated membraneless compartment that stores maternal mRNAs in oocytes: acts by undergoing liquid-liquid phase separation upon binding to maternal mRNAs. Binds to the 3'-UTR of maternal mRNAs in immature oocytes, inhibiting their translation. The polypeptide is Zygote arrest protein 1.S (zar1.S) (Xenopus laevis (African clawed frog)).